The primary structure comprises 358 residues: Trace amine-associated receptor 7a (358 aa).

Residues 1–47 (MDKLVDNFLSGQSRTMSEDLLSASSPQLCYENLNGSCIRSPYSPGPR) lie on the Extracellular side of the membrane. A glycan (N-linked (GlcNAc...) asparagine) is linked at Asn34. Disulfide bonds link Cys37–Cys201 and Cys120–Cys205. Residues 48–68 (LILYAVFGFGAVLAVCGNLLV) traverse the membrane as a helical segment. At 69–83 (MTSILHFRQLHSPAN) the chain is on the cytoplasmic side. The chain crosses the membrane as a helical span at residues 84-104 (FLVASLACADFLVGLTVMPFS). Residues 105 to 121 (TVRSVEGCWYFGDTYCK) lie on the Extracellular side of the membrane. A helical membrane pass occupies residues 122 to 143 (FHSCFEGSFCYSSIFHLCFISV). Topologically, residues 144-166 (DRYIAVSDPLIYPTRFTASVSGK) are cytoplasmic. The chain crosses the membrane as a helical span at residues 167–187 (CITFSWLLSIIYSFSLLYTGA). Residues 188–212 (NEAGLEDLVSALTCVGGCQIAVNQS) are Extracellular-facing. Asn210 is a glycosylation site (N-linked (GlcNAc...) asparagine). Residues 213 to 233 (WVFINFLLFLVPTLVMMTVYS) form a helical membrane-spanning segment. The Cytoplasmic portion of the chain corresponds to 234-274 (KIFLIAKQQAQNIEKMSKQTTRASESYKDRVAKRERKAAKT). The helical transmembrane segment at 275–295 (LGIAVAAFLLSWLPYFIDSII) threads the bilayer. At 296–309 (DAFLGFITPTYVYE) the chain is on the extracellular side. A helical transmembrane segment spans residues 310 to 333 (ILVWIAYYNSAMNPLIYAFFYPWF). Over 334 to 358 (RKAIKLIVTGKILRQNSSVTNLFPE) the chain is Cytoplasmic.

It belongs to the G-protein coupled receptor 1 family.

It is found in the cell membrane. Functionally, olfactory receptor specific for N,N-dimethylalkylamines trace amines. Trace amine compounds are enriched in animal body fluids and act on trace amine-associated receptors (TAARs) to elicit both intraspecific and interspecific innate behaviors. Ligand-binding causes a conformation change that triggers signaling via G(s)-class of G alpha proteins (GNAL or GNAS). This chain is Trace amine-associated receptor 7a, found in Rattus norvegicus (Rat).